A 90-amino-acid polypeptide reads, in one-letter code: Small ribosomal subunit protein uS15c (90 aa).

It belongs to the universal ribosomal protein uS15 family. As to quaternary structure, part of the 30S ribosomal subunit.

Its subcellular location is the plastid. It is found in the chloroplast. The polypeptide is Small ribosomal subunit protein uS15c (rps15) (Platanus occidentalis (Sycamore)).